The sequence spans 452 residues: Trigger factor (452 aa).

Residues 171-256 (GDRVTVSFKG…ATKLEAPQET (86 aa)) enclose the PPIase FKBP-type domain.

Belongs to the FKBP-type PPIase family. Tig subfamily.

The protein localises to the cytoplasm. The catalysed reaction is [protein]-peptidylproline (omega=180) = [protein]-peptidylproline (omega=0). Involved in protein export. Acts as a chaperone by maintaining the newly synthesized protein in an open conformation. Functions as a peptidyl-prolyl cis-trans isomerase. This Rhodopseudomonas palustris (strain ATCC BAA-98 / CGA009) protein is Trigger factor.